The following is a 62-amino-acid chain: Photosystem II reaction center protein Z (62 aa).

Transmembrane regions (helical) follow at residues Leu-8–Ser-28 and Val-41–Val-61.

It belongs to the PsbZ family. In terms of assembly, PSII is composed of 1 copy each of membrane proteins PsbA, PsbB, PsbC, PsbD, PsbE, PsbF, PsbH, PsbI, PsbJ, PsbK, PsbL, PsbM, PsbT, PsbX, PsbY, PsbZ, Psb30/Ycf12, at least 3 peripheral proteins of the oxygen-evolving complex and a large number of cofactors. It forms dimeric complexes.

The protein localises to the plastid. It localises to the chloroplast thylakoid membrane. Functionally, may control the interaction of photosystem II (PSII) cores with the light-harvesting antenna, regulates electron flow through the 2 photosystem reaction centers. PSII is a light-driven water plastoquinone oxidoreductase, using light energy to abstract electrons from H(2)O, generating a proton gradient subsequently used for ATP formation. The chain is Photosystem II reaction center protein Z from Cyanidioschyzon merolae (strain NIES-3377 / 10D) (Unicellular red alga).